Consider the following 242-residue polypeptide: Large ribosomal subunit protein uL1 (242 aa).

This sequence belongs to the universal ribosomal protein uL1 family. In terms of assembly, part of the 50S ribosomal subunit.

Binds directly to 23S rRNA. The L1 stalk is quite mobile in the ribosome, and is involved in E site tRNA release. In terms of biological role, protein L1 is also a translational repressor protein, it controls the translation of the L11 operon by binding to its mRNA. The chain is Large ribosomal subunit protein uL1 from Streptomyces virginiae (Streptomyces cinnamonensis).